Reading from the N-terminus, the 267-residue chain is Cell division protein FtsQ (267 aa).

The Cytoplasmic portion of the chain corresponds to 1–32; the sequence is MRKKTSSNKKKQTKKTNNISLRRKLRLIYKKA. The helical transmembrane segment at 33–53 threads the bilayer; that stretch reads ILGLKIALIIFVCLFVFTKYF. Topologically, residues 54–267 are periplasmic; that stretch reads AGIKTYLTTN…DKNKYYIEKY (214 aa). In terms of domain architecture, POTRA spans 73–141; sequence FKLENVIIEG…NTVYIKLFER (69 aa).

This sequence belongs to the FtsQ/DivIB family. FtsQ subfamily.

The protein resides in the cell inner membrane. Functionally, essential cell division protein. This is Cell division protein FtsQ from Rickettsia felis (strain ATCC VR-1525 / URRWXCal2) (Rickettsia azadi).